We begin with the raw amino-acid sequence, 734 residues long: Subtilisin-like protease (734 aa).

An N-terminal signal peptide occupies residues 1 to 20 (MTCICIFSIAFLLSFHLTTA). The region spanning 28 to 109 (TYIVHVDKPD…AKLEKVLTLH (82 aa)) is the Inhibitor I9 domain. The region spanning 114–591 (PNFLGLYQNM…AGHVNPSKAS (478 aa)) is the Peptidase S8 domain. D141 serves as the catalytic Charge relay system. N172 carries an N-linked (GlcNAc...) asparagine glycan. Residue H199 is the Charge relay system of the active site. 2 N-linked (GlcNAc...) asparagine glycosylation sites follow: N222 and N306. Residues 357-442 (PLVYPGTSDE…THVGYAAGEM (86 aa)) enclose the PA domain. N448 and N509 each carry an N-linked (GlcNAc...) asparagine glycan. S524 functions as the Charge relay system in the catalytic mechanism. A glycan (N-linked (GlcNAc...) asparagine) is linked at N652.

Belongs to the peptidase S8 family.

The protein resides in the secreted. It is found in the extracellular space. The protein localises to the apoplast. Required for arbuscular mycorrhiza (AM) development during AM symbiosis with AM fungi (e.g. Glomeromycota intraradices). The chain is Subtilisin-like protease from Petunia hybrida (Petunia).